The primary structure comprises 337 residues: ILSPFKFSRRATGDNDVRFKVLYCGVCHSDLHMVKNEWGMTTYPIVPGHEIVGRVTEVGSKVEKFKVGDAVGVGCLVGSCLSCENCDDDSENNCAKQVQTYAFTNVDGSITYGGYADSMVADQHFVLRWPENLPLDSGAPLLCAGITTYSPLRYHGLDKPGTKVGVVGLGGLGHVAVKMAKAFGAHVTVISTSESKKQEALEKLGADEFLVSSDSDQMQAATGTLHGIIDTVSALHPVVPLLGLLKVNGKLVMVGAPEKPLELPVFPLLMGRKVLAGSNIGGLKETQEMLDFAAQHNITADVEVIPVDYVNTAMERLVKSDVRYRFVIDVANTIKTE.

C27, H49, C80, C83, C86, C94, and C143 together coordinate Zn(2+).

This sequence belongs to the zinc-containing alcohol dehydrogenase family. Requires Zn(2+) as cofactor.

It carries out the reaction D-mannitol + NAD(+) = D-mannose + NADH + H(+). Functionally, oxidizes mannitol to mannose. Provides the initial step by which translocated mannitol is committed to central metabolism and, by regulating mannitol pool size, is important in regulating salt tolerance at the cellular level. This chain is Mannitol dehydrogenase (ELI3), found in Petroselinum crispum (Parsley).